The sequence spans 466 residues: 3-isopropylmalate dehydratase large subunit (466 aa).

[4Fe-4S] cluster is bound by residues Cys347, Cys407, and Cys410.

The protein belongs to the aconitase/IPM isomerase family. LeuC type 1 subfamily. As to quaternary structure, heterodimer of LeuC and LeuD. Requires [4Fe-4S] cluster as cofactor.

The enzyme catalyses (2R,3S)-3-isopropylmalate = (2S)-2-isopropylmalate. It participates in amino-acid biosynthesis; L-leucine biosynthesis; L-leucine from 3-methyl-2-oxobutanoate: step 2/4. In terms of biological role, catalyzes the isomerization between 2-isopropylmalate and 3-isopropylmalate, via the formation of 2-isopropylmaleate. The protein is 3-isopropylmalate dehydratase large subunit of Solibacter usitatus (strain Ellin6076).